We begin with the raw amino-acid sequence, 89 residues long: Sec-independent protein translocase protein TatA (89 aa).

Residues Met-1–Gly-21 traverse the membrane as a helical segment. The span at Glu-47–Ala-61 shows a compositional bias: basic and acidic residues. Residues Glu-47 to Ala-89 form a disordered region. Residues Ala-62–Ala-74 show a composition bias toward low complexity. Basic and acidic residues predominate over residues Glu-75–Ala-89.

This sequence belongs to the TatA/E family. As to quaternary structure, the Tat system comprises two distinct complexes: a TatABC complex, containing multiple copies of TatA, TatB and TatC subunits, and a separate TatA complex, containing only TatA subunits. Substrates initially bind to the TatABC complex, which probably triggers association of the separate TatA complex to form the active translocon.

Its subcellular location is the cell inner membrane. Functionally, part of the twin-arginine translocation (Tat) system that transports large folded proteins containing a characteristic twin-arginine motif in their signal peptide across membranes. TatA could form the protein-conducting channel of the Tat system. The sequence is that of Sec-independent protein translocase protein TatA from Shewanella pealeana (strain ATCC 700345 / ANG-SQ1).